The primary structure comprises 161 residues: 2-C-methyl-D-erythritol 2,4-cyclodiphosphate synthase (161 aa).

Residues Asp-9 and His-11 each contribute to the a divalent metal cation site. Residues 9-11 and 37-38 each bind 4-CDP-2-C-methyl-D-erythritol 2-phosphate; these read DFH and HS. His-45 provides a ligand contact to a divalent metal cation. Residues 59-61, 64-68, 135-138, and Arg-145 each bind 4-CDP-2-C-methyl-D-erythritol 2-phosphate; these read DIG, FPDTD, and TTTE.

The protein belongs to the IspF family. In terms of assembly, homotrimer. A divalent metal cation serves as cofactor.

It carries out the reaction 4-CDP-2-C-methyl-D-erythritol 2-phosphate = 2-C-methyl-D-erythritol 2,4-cyclic diphosphate + CMP. It functions in the pathway isoprenoid biosynthesis; isopentenyl diphosphate biosynthesis via DXP pathway; isopentenyl diphosphate from 1-deoxy-D-xylulose 5-phosphate: step 4/6. Functionally, involved in the biosynthesis of isopentenyl diphosphate (IPP) and dimethylallyl diphosphate (DMAPP), two major building blocks of isoprenoid compounds. Catalyzes the conversion of 4-diphosphocytidyl-2-C-methyl-D-erythritol 2-phosphate (CDP-ME2P) to 2-C-methyl-D-erythritol 2,4-cyclodiphosphate (ME-CPP) with a corresponding release of cytidine 5-monophosphate (CMP). The protein is 2-C-methyl-D-erythritol 2,4-cyclodiphosphate synthase of Leptospira borgpetersenii serovar Hardjo-bovis (strain JB197).